The sequence spans 884 residues: Probable leucine--tRNA ligase, cytoplasmic (884 aa).

A 'HIGH' region motif is present at residues 40 to 50 (PYMNGKLHLGH). A 'KMSKS' region motif is present at residues 566 to 570 (KMSKS). Lys569 is an ATP binding site.

The protein belongs to the class-I aminoacyl-tRNA synthetase family.

The protein resides in the cytoplasm. The enzyme catalyses tRNA(Leu) + L-leucine + ATP = L-leucyl-tRNA(Leu) + AMP + diphosphate. In Vairimorpha ceranae (strain BRL01) (Microsporidian parasite), this protein is Probable leucine--tRNA ligase, cytoplasmic.